A 314-amino-acid polypeptide reads, in one-letter code: uncharacterized protein (314 aa).

This sequence to M.leprae ML0607.

This is an uncharacterized protein from Mycobacterium bovis (strain ATCC BAA-935 / AF2122/97).